A 512-amino-acid chain; its full sequence is Putative B3 domain-containing protein REM4 (512 aa).

The segment at residues 11-103 (NKAFFIIDLS…VFHVSPFGRS (93 aa)) is a DNA-binding region (TF-B3 1). The interval 111–145 (SSSTSDDDDDERTVFDDDEDDDVGDDDDNSISEDD) is disordered. A compositionally biased stretch (acidic residues) spans 115–145 (SDDDDDERTVFDDDEDDDVGDDDDNSISEDD). 2 consecutive DNA-binding regions (TF-B3) follow at residues 169 to 265 (YLVA…LCPN) and 307 to 403 (ILTF…CSKV). Positions 408–465 (SSDGHKTADRKPRMTDQAPLAEEQTDNRVEKRAQVTEEGGPSRSTRADPGNLQQKQPC) are disordered. Composition is skewed to basic and acidic residues over residues 410-421 (DGHKTADRKPRM) and 432-442 (TDNRVEKRAQV).

Its subcellular location is the nucleus. In Arabidopsis thaliana (Mouse-ear cress), this protein is Putative B3 domain-containing protein REM4 (REM4).